The sequence spans 405 residues: uncharacterized protein (405 aa).

The Cytoplasmic segment spans residues 1–18 (MPEPVAEPALNGLRLNLR). Residues 19 to 39 (IVSIVMFNFASYLTIGLPLAV) traverse the membrane as a helical segment. Over 40–46 (LPGYVHD) the chain is Periplasmic. A helical transmembrane segment spans residues 47–67 (VMGFSAFWAGLVISLQYFATL). The Cytoplasmic segment spans residues 68–84 (LSRPHAGRYADSLGPKK). Residues 85 to 105 (IVVFGLCGCFLSGLGYLTAGL) traverse the membrane as a helical segment. A topological domain (periplasmic) is located at residue Thr106. Residues 107–127 (ASLPVISLLLLCLGRVILGIG) traverse the membrane as a helical segment. Residues 128–155 (QSFAGTGSTLWGVGVVGSLHIGRVISWN) lie on the Cytoplasmic side of the membrane. Residues 156 to 176 (GIVTYGAMAMGAPLGVVFYHW) form a helical membrane-spanning segment. Position 177 (Gly177) is a topological domain, periplasmic. A helical transmembrane segment spans residues 178 to 198 (GLQALALIIMGVALVAILLAI). Over 199 to 223 (PRPTVKASKGKPLPFRAVLGRVWLY) the chain is Cytoplasmic. The helical transmembrane segment at 224–244 (GMALALASAGFGVIATFITLF) threads the bilayer. Residues 245–251 (YDAKGWD) lie on the Periplasmic side of the membrane. Residues 252–272 (GAAFALTLFSCAFVGTRLLFP) form a helical membrane-spanning segment. Over 273-282 (NGINRIGGLN) the chain is Cytoplasmic. The chain crosses the membrane as a helical span at residues 283-303 (VAMICFSVEIIGLLLVGVATM). The Periplasmic portion of the chain corresponds to 304–308 (PWMAK). The helical transmembrane segment at 309 to 329 (IGVLLAGAGFSLVFPALGVVA) threads the bilayer. At 330-343 (VKAVPQQNQGAALA) the chain is on the cytoplasmic side. Residues 344–364 (TYTVFMDLSLGVTGPLAGLVM) form a helical membrane-spanning segment. Residue Ser365 is a topological domain, periplasmic. The helical transmembrane segment at 366 to 386 (WAGVPVIYLAAAGLVAIALLL) threads the bilayer. The Cytoplasmic segment spans residues 387–405 (TWRLKKRPPEHVPEAASSS).

This sequence belongs to the major facilitator superfamily. YhhS family.

It is found in the cell inner membrane. Functionally, confers high-level resistance to glyphosate when overexpressed. Overexpression has no effect on intracellular arabinose concentrations. This is an uncharacterized protein from Escherichia coli (strain K12).